Reading from the N-terminus, the 284-residue chain is MKRLPAVAGSFYESDPKKLKMQIEWSFRHNIGPRDIPKQTYEKKKRDNLFFVVPHAGYIYSGPVAAHSYYYLVSEGRPDVVIILGPNHTGLGSYVSAWPKGEWETPLGSVKIDEEILMQLVKESEVIDLDEKSHLYEHSIEVQLPFLQYFFDDDFKIVPIVIMMQTLEIAEFLADAIYNVMQKNPDKDIVVLASSDMNHYDPHEITVKKDVEAIEKIQQLDYKGLYEVVEGKDVTLCGYGPIMVNLILAKKFGKKAYILKHATSGDTSGPKDSVVGYLAARFGS.

This sequence belongs to the MEMO1 family.

This chain is MEMO1 family protein LS215_2219, found in Saccharolobus islandicus (strain L.S.2.15 / Lassen #1) (Sulfolobus islandicus).